The chain runs to 903 residues: HTH-type transcriptional regulator MalT (903 aa).

Residue 39 to 46 (CPAGYGKT) participates in ATP binding. In terms of domain architecture, HTH luxR-type spans 832-897 (ELIRTSPLTQ…DAVQQAQRLL (66 aa)). Residues 856–875 (NDQIAGELEVAATTIKTHIR) constitute a DNA-binding region (H-T-H motif).

This sequence belongs to the MalT family. In terms of assembly, monomer in solution. Oligomerizes to an active state in the presence of the positive effectors ATP and maltotriose.

Its activity is regulated as follows. Activated by ATP and maltotriose, which are both required for DNA binding. Its function is as follows. Positively regulates the transcription of the maltose regulon whose gene products are responsible for uptake and catabolism of malto-oligosaccharides. Specifically binds to the promoter region of its target genes, recognizing a short DNA motif called the MalT box. This chain is HTH-type transcriptional regulator MalT, found in Yersinia enterocolitica serotype O:8 / biotype 1B (strain NCTC 13174 / 8081).